Consider the following 103-residue polypeptide: Histone H4 (103 aa).

A compositionally biased stretch (gly residues) spans 1-14 (MSGRGKGGKGLGKG). A disordered region spans residues 1–20 (MSGRGKGGKGLGKGGAKRHR). 6 positions are modified to N6-(2-hydroxyisobutyryl)lysine; alternate: lysine 6, lysine 9, lysine 13, lysine 17, lysine 32, and lysine 45. An N6-acetyl-N6-methyllysine; alternate modification is found at lysine 6. N6-butyryllysine; alternate is present on residues lysine 6, lysine 9, lysine 13, lysine 17, lysine 32, and lysine 45. N6-glutaryllysine; alternate is present on lysine 6. Lysine 9 is subject to N6-propionyllysine; alternate. N6-acetyl-N6-methyllysine; alternate is present on lysine 13. Lysine 13 is subject to N6-glutaryllysine; alternate. 3 positions are modified to N6-propionyllysine; alternate: lysine 17, lysine 32, and lysine 45. The DNA-binding element occupies 17–21 (KRHRK). Lysine 32 carries the post-translational modification N6-glutaryllysine; alternate. Position 32 is an N6-succinyllysine; alternate (lysine 32). Lysine 60, lysine 78, lysine 80, and lysine 92 each carry N6-glutaryllysine; alternate. Lysine 60 carries the post-translational modification N6-(2-hydroxyisobutyryl)lysine. An N6-(2-hydroxyisobutyryl)lysine; alternate mark is found at lysine 78, lysine 80, and lysine 92. An N6-butyryllysine; alternate mark is found at lysine 78, lysine 80, and lysine 92. Residues lysine 78, lysine 80, and lysine 92 each carry the N6-propionyllysine; alternate modification. Lysine 78 carries the post-translational modification N6-succinyllysine. Residue lysine 92 is modified to N6-succinyllysine; alternate.

Belongs to the histone H4 family. In terms of assembly, the nucleosome is a histone octamer containing two molecules each of H2A, H2B, H3 and H4 assembled in one H3-H4 heterotetramer and two H2A-H2B heterodimers. The octamer wraps approximately 147 bp of DNA. In terms of processing, butyrylation of histones marks active promoters and competes with histone acetylation. Glutarylation at Lys-92 (H4K91glu) destabilizes nucleosomes by promoting dissociation of the H2A-H2B dimers from nucleosomes.

The protein localises to the nucleus. It is found in the chromosome. Functionally, core component of nucleosome. Nucleosomes wrap and compact DNA into chromatin, limiting DNA accessibility to the cellular machineries which require DNA as a template. Histones thereby play a central role in transcription regulation, DNA repair, DNA replication and chromosomal stability. DNA accessibility is regulated via a complex set of post-translational modifications of histones, also called histone code, and nucleosome remodeling. This is Histone H4 (H4.1) from Oikopleura dioica (Tunicate).